The chain runs to 601 residues: Rhizobactin siderophore biosynthesis protein RhbF (601 aa).

It belongs to the IucA/IucC family.

It functions in the pathway siderophore biosynthesis; rhizobactin biosynthesis. The polypeptide is Rhizobactin siderophore biosynthesis protein RhbF (rhbF) (Rhizobium meliloti (strain 1021) (Ensifer meliloti)).